The chain runs to 122 residues: Ribosome-binding factor A (122 aa).

This sequence belongs to the RbfA family. Monomer. Binds 30S ribosomal subunits, but not 50S ribosomal subunits or 70S ribosomes.

The protein resides in the cytoplasm. One of several proteins that assist in the late maturation steps of the functional core of the 30S ribosomal subunit. Associates with free 30S ribosomal subunits (but not with 30S subunits that are part of 70S ribosomes or polysomes). Required for efficient processing of 16S rRNA. May interact with the 5'-terminal helix region of 16S rRNA. The sequence is that of Ribosome-binding factor A from Prosthecochloris aestuarii (strain DSM 271 / SK 413).